The primary structure comprises 525 residues: GMP synthase [glutamine-hydrolyzing] (525 aa).

The region spanning 16 to 205 is the Glutamine amidotransferase type-1 domain; sequence PVLVVDFGAQ…LHDFAGLGAQ (190 aa). The active-site Nucleophile is Cys93. Catalysis depends on residues His179 and Glu181. In terms of domain architecture, GMPS ATP-PPase spans 206–399; it reads WTPANIANAL…LGLPEEIVAR (194 aa). 233 to 239 is a binding site for ATP; that stretch reads SGGVDSA.

Homodimer.

The catalysed reaction is XMP + L-glutamine + ATP + H2O = GMP + L-glutamate + AMP + diphosphate + 2 H(+). Its pathway is purine metabolism; GMP biosynthesis; GMP from XMP (L-Gln route): step 1/1. Functionally, catalyzes the synthesis of GMP from XMP. The chain is GMP synthase [glutamine-hydrolyzing] (guaA) from Mycobacterium tuberculosis (strain CDC 1551 / Oshkosh).